We begin with the raw amino-acid sequence, 312 residues long: 4-hydroxyphenylacetate decarboxylase activating enzyme (312 aa).

The Radical SAM core domain occupies 16–299 (HDGPGCRTSV…MEHLQQLYLD (284 aa)). Residues Cys-30, Cys-34, Cys-37, Cys-56, Cys-62, Cys-65, and Cys-101 each contribute to the [4Fe-4S] cluster site. Residue 36–38 (WCA) coordinates S-adenosyl-L-methionine. 4Fe-4S ferredoxin-type domains lie at 47–79 (KHIMVAENVCKWKNGCRSCINACSHDSIKFSED) and 80–112 (GKLKISWDTCEKCETFDCVNMCPNNALKQCVKE). S-adenosyl-L-methionine-binding positions include Gly-140, 189-191 (DVK), and His-263.

This sequence belongs to the organic radical-activating enzymes family. Monomer. [4Fe-4S] cluster serves as cofactor.

The catalysed reaction is glycyl-[protein] + reduced [flavodoxin] + S-adenosyl-L-methionine = glycin-2-yl radical-[protein] + semiquinone [flavodoxin] + 5'-deoxyadenosine + L-methionine + H(+). Functionally, catalyzes activation of 4-hydroxyphenylacetate decarboxylase under anaerobic conditions by generation of an organic free radical on a glycine residue, via a homolytic cleavage of S-adenosyl-L-methionine (SAM). The protein is 4-hydroxyphenylacetate decarboxylase activating enzyme of Clostridium scatologenes.